A 29-amino-acid chain; its full sequence is Neurotoxin BmK A3-6 (29 aa).

Post-translationally, contains 3 disulfide bonds. As to expression, expressed by the venom gland.

The protein localises to the secreted. This is Neurotoxin BmK A3-6 from Olivierus martensii (Manchurian scorpion).